The chain runs to 116 residues: Large ribosomal subunit protein uL18 (116 aa).

Belongs to the universal ribosomal protein uL18 family. In terms of assembly, part of the 50S ribosomal subunit; part of the 5S rRNA/L5/L18/L25 subcomplex. Contacts the 5S and 23S rRNAs.

Its function is as follows. This is one of the proteins that bind and probably mediate the attachment of the 5S RNA into the large ribosomal subunit, where it forms part of the central protuberance. This Shewanella sediminis (strain HAW-EB3) protein is Large ribosomal subunit protein uL18.